We begin with the raw amino-acid sequence, 623 residues long: MTDQPAPTDHLIRAADEVKIRQRLVRVALGHVAGDTRLRVGKLLDVHSRMWLSDQEIILSGRRIAYVGPAGSYPGGVAHEVHEPDLMAVPGFGEVHKHIESSHVTPEWEAALVLPHGNTWTCEASHEFSNVNGPHNLEFWLTARLAGSPQKIFPLPGSAVPPTAYEWGGGHFGYDEQAGFLNESLMVAGLDEVMDWPAVWNPENPSYDRLWGMIEATFEKRGVIEGHAAGIRDMATINAFAAAGLASDHEAWTTEEVLDKLRRGLFMELRPHSLSEMVKGLLEAGLEDWGQFALTTDDRSCSDTLKMGATDHNVRLAISAGLSPEVAIQMVTINPARHMRLTPWVGSLAPGRFADIVLLDDLPSVSIRQVWADGELVAEDGTYLKPIPKIDWPDWATQTVKIDRAMMADDFAIPAKRGRDTMHAALLRPFHWDDDFITMDLPVKDGQVQRDPRRNVTKFAIVDRFSGEGKTSAMFWLGTGPRTSDTALACSMGHDKHNVWAVGSSDAAMAMAVNALRDIQGGWALVREGQLVATVRYEVGGLMTCRPPAELDAEMQALYAEGEKIDWMYEPTVSPRWFPGFPERLAFATLTCAPWRWVLVAPSDRAPDGFVNVATGQTHPVVW.

It belongs to the metallo-dependent hydrolases superfamily. Adenine deaminase family. It depends on Mn(2+) as a cofactor.

The catalysed reaction is adenine + H2O + H(+) = hypoxanthine + NH4(+). The protein is Adenine deaminase 2 of Jannaschia sp. (strain CCS1).